The primary structure comprises 364 residues: Fructose-1,6-bisphosphatase class 1 3 (364 aa).

4 residues coordinate Mg(2+): Glu101, Asp123, Leu125, and Asp126. Residues 126 to 129 (DGSS) and Asn218 contribute to the substrate site. A Mg(2+)-binding site is contributed by Glu290.

It belongs to the FBPase class 1 family. As to quaternary structure, homotetramer. Mg(2+) is required as a cofactor.

It localises to the cytoplasm. It carries out the reaction beta-D-fructose 1,6-bisphosphate + H2O = beta-D-fructose 6-phosphate + phosphate. The protein operates within carbohydrate biosynthesis; gluconeogenesis. This Cupriavidus necator (strain ATCC 17699 / DSM 428 / KCTC 22496 / NCIMB 10442 / H16 / Stanier 337) (Ralstonia eutropha) protein is Fructose-1,6-bisphosphatase class 1 3.